Here is a 390-residue protein sequence, read N- to C-terminus: Coiled-coil domain-containing protein 85C (390 aa).

Coiled-coil stretches lie at residues 26 to 86 (KEEL…RELC) and 116 to 146 (KEVG…KEII). Residues 153–237 (RNGPGSRSSI…RSIPNGLNDS (85 aa)) are disordered. The segment covering 157–172 (GSRSSIDSQNSLTNLN) has biased composition (polar residues). The segment covering 182–194 (DGSSTSSTGSAGS) has biased composition (low complexity).

The protein belongs to the CCDC85 family.

Its subcellular location is the cell junction. It localises to the tight junction. The protein resides in the adherens junction. In terms of biological role, may play a role in cell-cell adhesion and epithelium development. May play an important role in cortical development, especially in the maintenance of radial glia. This Xenopus laevis (African clawed frog) protein is Coiled-coil domain-containing protein 85C (ccdc85c).